The sequence spans 369 residues: Anhydro-N-acetylmuramic acid kinase (369 aa).

12–19 lines the ATP pocket; it reads GTSMDGVD.

It belongs to the anhydro-N-acetylmuramic acid kinase family.

The enzyme catalyses 1,6-anhydro-N-acetyl-beta-muramate + ATP + H2O = N-acetyl-D-muramate 6-phosphate + ADP + H(+). Its pathway is amino-sugar metabolism; 1,6-anhydro-N-acetylmuramate degradation. It participates in cell wall biogenesis; peptidoglycan recycling. Catalyzes the specific phosphorylation of 1,6-anhydro-N-acetylmuramic acid (anhMurNAc) with the simultaneous cleavage of the 1,6-anhydro ring, generating MurNAc-6-P. Is required for the utilization of anhMurNAc either imported from the medium or derived from its own cell wall murein, and thus plays a role in cell wall recycling. The chain is Anhydro-N-acetylmuramic acid kinase from Shewanella baltica (strain OS155 / ATCC BAA-1091).